Consider the following 183-residue polypeptide: Dual-action ribosomal maturation protein DarP (183 aa).

The protein belongs to the DarP family.

The protein localises to the cytoplasm. Functionally, member of a network of 50S ribosomal subunit biogenesis factors which assembles along the 30S-50S interface, preventing incorrect 23S rRNA structures from forming. Promotes peptidyl transferase center (PTC) maturation. The polypeptide is Dual-action ribosomal maturation protein DarP (Escherichia coli O7:K1 (strain IAI39 / ExPEC)).